A 242-amino-acid chain; its full sequence is Ribonuclease PH (242 aa).

Residues Arg-89 and 127 to 129 contribute to the phosphate site; that span reads GTR.

Belongs to the RNase PH family. In terms of assembly, homohexameric ring arranged as a trimer of dimers.

The enzyme catalyses tRNA(n+1) + phosphate = tRNA(n) + a ribonucleoside 5'-diphosphate. Functionally, phosphorolytic 3'-5' exoribonuclease that plays an important role in tRNA 3'-end maturation. Removes nucleotide residues following the 3'-CCA terminus of tRNAs; can also add nucleotides to the ends of RNA molecules by using nucleoside diphosphates as substrates, but this may not be physiologically important. Probably plays a role in initiation of 16S rRNA degradation (leading to ribosome degradation) during starvation. The protein is Ribonuclease PH of Neisseria meningitidis serogroup A / serotype 4A (strain DSM 15465 / Z2491).